The primary structure comprises 560 residues: Putative transport protein VV1438 (560 aa).

5 consecutive transmembrane segments (helical) span residues 5 to 25, 37 to 57, 66 to 86, 91 to 111, and 164 to 184; these read VVLL…AIGL, LGNS…GFSF, FMLF…GIFF, HYFT…YFAS, and VGYA…AKLL. RCK C-terminal domains follow at residues 203–292 and 293–376; these read RGLG…FRNG and KEVF…RIGF. A run of 6 helical transmembrane segments spans residues 386-406, 409-429, 443-463, 478-498, 506-526, and 539-559; these read LLAF…TMTF, VSFS…LGFL, ALNM…GLSA, IIGI…LVGA, ALLF…DIVN, and AGTY…LIIL.

Belongs to the AAE transporter (TC 2.A.81) family. YbjL subfamily.

It localises to the cell membrane. This Vibrio vulnificus (strain YJ016) protein is Putative transport protein VV1438.